The following is a 669-amino-acid chain: DNA ligase (669 aa).

Residues 34–38, 83–84, and Glu114 contribute to the NAD(+) site; these read DAEYD and SL. Lys116 acts as the N6-AMP-lysine intermediate in catalysis. 4 residues coordinate NAD(+): Arg137, Glu171, Lys287, and Lys311. Cys405, Cys408, Cys423, and Cys428 together coordinate Zn(2+). Residues 591–669 form the BRCT domain; sequence NVESYFAGKT…EERFLQELNK (79 aa).

It belongs to the NAD-dependent DNA ligase family. LigA subfamily. Requires Mg(2+) as cofactor. The cofactor is Mn(2+).

The enzyme catalyses NAD(+) + (deoxyribonucleotide)n-3'-hydroxyl + 5'-phospho-(deoxyribonucleotide)m = (deoxyribonucleotide)n+m + AMP + beta-nicotinamide D-nucleotide.. DNA ligase that catalyzes the formation of phosphodiester linkages between 5'-phosphoryl and 3'-hydroxyl groups in double-stranded DNA using NAD as a coenzyme and as the energy source for the reaction. It is essential for DNA replication and repair of damaged DNA. The chain is DNA ligase from Bacillus anthracis (strain A0248).